The chain runs to 91 residues: UPF0386 protein Caul_4643 (91 aa).

This sequence belongs to the UPF0386 family.

The protein is UPF0386 protein Caul_4643 of Caulobacter sp. (strain K31).